A 449-amino-acid chain; its full sequence is Exodeoxyribonuclease 7 large subunit (449 aa).

It belongs to the XseA family. In terms of assembly, heterooligomer composed of large and small subunits.

The protein localises to the cytoplasm. The catalysed reaction is Exonucleolytic cleavage in either 5'- to 3'- or 3'- to 5'-direction to yield nucleoside 5'-phosphates.. Bidirectionally degrades single-stranded DNA into large acid-insoluble oligonucleotides, which are then degraded further into small acid-soluble oligonucleotides. This is Exodeoxyribonuclease 7 large subunit from Salmonella paratyphi A (strain ATCC 9150 / SARB42).